Reading from the N-terminus, the 588-residue chain is MAAPALALVSFEDVVVTFTGEEWGHLDLAQRTLYQEVMLETCRLLVSLGHPVPKPELIYLLEHGQELWTVKRGLSQSTCAGEKAKPKITEPTASQLAFSEESSFQELLAQRSSRDSRLGQARDEEKLIKIQEGNLRPGTNPHKEICPEKLSYKHDDLEPDDSLGLRVLQERVTPQDALHECDSQGPGKDPMTDARNNPYTCTECGKGFSKKWALVRHQQIHAGVKPYECNECGKACRYMADVIRHMRLHTGEKPYKCIECGKAFKRRFHLTEHQRIHTGDKPYECKECGKAFTHRSSFIQHNMTHTREKPFLCKECGKAFYYSSSFAQHMRIHTGKKLYECGECGKAFTHRSTFIQHNVTHTGEKPFLCKECGKTFCLNSSFTQHMRIHTGEKPYECGECGKAFTHRSTFIRHKRTHTGEKPFECKECGKAFCDSSSLIQHMRIHTGEKPYECSECGKAFTHHSVFIRHNRTHSGQKPLECKECAKAFYYSSSFTRHMRIHTGEKPYVCRECGKAFTQPANFVRHNRIHTGEKPFECKECEKAFCDNFALTQHMRTHTGEKPFECNECGKTFSHSSSFTHHRKIHTRV.

The KRAB domain occupies 9 to 80; that stretch reads VSFEDVVVTF…KRGLSQSTCA (72 aa). 14 C2H2-type zinc fingers span residues 199-221, 227-249, 255-277, 283-305, 311-333, 339-361, 367-389, 395-417, 423-445, 451-473, 479-501, 507-529, 535-557, and 563-585; these read YTCTECGKGFSKKWALVRHQQIH, YECNECGKACRYMADVIRHMRLH, YKCIECGKAFKRRFHLTEHQRIH, YECKECGKAFTHRSSFIQHNMTH, FLCKECGKAFYYSSSFAQHMRIH, YECGECGKAFTHRSTFIQHNVTH, FLCKECGKTFCLNSSFTQHMRIH, YECGECGKAFTHRSTFIRHKRTH, FECKECGKAFCDSSSLIQHMRIH, YECSECGKAFTHHSVFIRHNRTH, LECKECAKAFYYSSSFTRHMRIH, YVCRECGKAFTQPANFVRHNRIH, FECKECEKAFCDNFALTQHMRTH, and FECNECGKTFSHSSSFTHHRKIH.

It belongs to the krueppel C2H2-type zinc-finger protein family.

The protein resides in the nucleus. Functionally, may be involved in transcriptional regulation. This is Zinc finger protein 599 (ZNF599) from Homo sapiens (Human).